We begin with the raw amino-acid sequence, 135 residues long: MACGLVASNLNLKPGECLKVRGELAPDAKSFVLNLGKDSNNLCLHFNPRFNAHGDANTIVCNSKDDGTWGTEQRETAFPFQPGSITEVCITFDQADLTIKLPDGHEFKFPNRLNMEAINYMAADGDFKIKCVAFE.

Position 2 is an N-acetylalanine (A2). The region spanning 4–135 (GLVASNLNLK…DFKIKCVAFE (132 aa)) is the Galectin domain. N6-acetyllysine occurs at positions 13, 19, and 29. At S30 the chain carries Phosphoserine. Residues 45–49 (HFNPR), H53, N62, and 69–72 (WGTE) each bind a beta-D-galactoside. K108 is subject to N6-acetyllysine; alternate. K108 carries the post-translational modification N6-succinyllysine; alternate. The residue at position 128 (K128) is an N6-acetyllysine.

As to quaternary structure, homodimer. Binds LGALS3BP. Interacts with CD2, CD3, CD4, CD6, CD7, CD43, ALCAM and CD45. Interacts with laminin (via poly-N-acetyllactosamine). Interacts with SUSD2. Interacts with cargo receptor TMED10; the interaction mediates the translocation from the cytoplasm into the ERGIC (endoplasmic reticulum-Golgi intermediate compartment) and thereby secretion. Interacts with CD69.

It is found in the secreted. The protein localises to the extracellular space. It localises to the extracellular matrix. Its subcellular location is the cytoplasm. Its function is as follows. Lectin that binds beta-galactoside and a wide array of complex carbohydrates. Plays a role in regulating apoptosis, cell proliferation and cell differentiation. Inhibits CD45 protein phosphatase activity and therefore the dephosphorylation of Lyn kinase. Strong inducer of T-cell apoptosis. Plays a negative role in Th17 cell differentiation via activation of the receptor CD69. The polypeptide is Galectin-1 (Lgals1) (Rattus norvegicus (Rat)).